The primary structure comprises 1081 residues: DNA primase (1081 aa).

Residues 484-497 (SPNKPQSVHSTPPL) are compositionally biased toward polar residues. The interval 484 to 508 (SPNKPQSVHSTPPLDQSRGDELSPG) is disordered. The segment at 1024–1064 (CLRAKHLRSARGLARTFLSISADVHGRLCASISQQCFATKC) adopts a CHC2-type zinc-finger fold.

It belongs to the herpesviridae DNA primase family. Associates with the helicase and the primase-associated factor to form the helicase-primase factor.

It is found in the host nucleus. Functionally, essential component of the helicase/primase complex. Unwinds the DNA at the replication forks and generates single-stranded DNA for both leading and lagging strand synthesis. The primase initiates primer synthesis and thereby produces large amount of short RNA primers on the lagging strand that the polymerase elongates using dNTPs. The polypeptide is DNA primase (Equus caballus (Horse)).